We begin with the raw amino-acid sequence, 48 residues long: Protein TUNAR (48 aa).

Positions 1-20 are disordered; sequence MVITSGNDEDRGGQEKESKE. Over residues 8–20 the composition is skewed to basic and acidic residues; that stretch reads DEDRGGQEKESKE. The chain crosses the membrane as a helical span at residues 24 to 44; it reads LAMLGIIGTILNLIVIIFVYI.

Interacts with ATPase ATP2A2/SERCA2. Interacts with ATPase ATP2A3/SERCA3; the interaction occurs at low levels in low glucose conditions and is increased by high glucose levels. As to expression, in the adult, expressed in Purkinje cells in the cerebellum, in motor neurons and interneurons in the spinal cord and in neurons of the cortex, hippocampus and thalamus (at protein level). Also detected in the developing cortex, hippocampus and thalamus at embryonic day E15.5 (at protein level).

The protein localises to the endoplasmic reticulum membrane. The protein resides in the extracellular vesicle membrane. In terms of biological role, in neurons, plays a role in the regulation of intracellular Ca(2+), possibly by acting as an activator of ATP2A2/SERCA2, thus increasing the efficiency with which Ca(2+) is removed from the cytoplasm. Inhibits differentiation of embryonic stem cells into neurons and inhibits neurite outgrowth, likely as a result of its role in intracellular Ca(2+) regulation. In pancreatic beta cells, lowers Ca(2+) levels in the endoplasmic reticulum and enhances glucose-stimulated insulin secretion. In Mus musculus (Mouse), this protein is Protein TUNAR.